A 245-amino-acid chain; its full sequence is tRNA (guanine-N(1)-)-methyltransferase (245 aa).

S-adenosyl-L-methionine-binding positions include glycine 111 and 131–136 (MGDYVL).

The protein belongs to the RNA methyltransferase TrmD family. As to quaternary structure, homodimer.

The protein resides in the cytoplasm. The enzyme catalyses guanosine(37) in tRNA + S-adenosyl-L-methionine = N(1)-methylguanosine(37) in tRNA + S-adenosyl-L-homocysteine + H(+). Specifically methylates guanosine-37 in various tRNAs. This chain is tRNA (guanine-N(1)-)-methyltransferase, found in Staphylococcus epidermidis (strain ATCC 35984 / DSM 28319 / BCRC 17069 / CCUG 31568 / BM 3577 / RP62A).